Consider the following 505-residue polypeptide: ATP synthase subunit alpha (505 aa).

Position 169-176 (169-176 (GDRKTGKT)) interacts with ATP.

It belongs to the ATPase alpha/beta chains family. F-type ATPases have 2 components, CF(1) - the catalytic core - and CF(0) - the membrane proton channel. CF(1) has five subunits: alpha(3), beta(3), gamma(1), delta(1), epsilon(1). CF(0) has three main subunits: a(1), b(2) and c(9-12). The alpha and beta chains form an alternating ring which encloses part of the gamma chain. CF(1) is attached to CF(0) by a central stalk formed by the gamma and epsilon chains, while a peripheral stalk is formed by the delta and b chains.

Its subcellular location is the cell membrane. It carries out the reaction ATP + H2O + 4 H(+)(in) = ADP + phosphate + 5 H(+)(out). Functionally, produces ATP from ADP in the presence of a proton gradient across the membrane. The alpha chain is a regulatory subunit. The chain is ATP synthase subunit alpha from Pediococcus pentosaceus (strain ATCC 25745 / CCUG 21536 / LMG 10740 / 183-1w).